A 158-amino-acid polypeptide reads, in one-letter code: MPKNLTPILEAIEPVIIGHDCELVDLEYVKEKSQDYLRIYVDKQPNGIDIETIAELSELVGEKLDSMQPDPLPDPYILELSSPGLERPIKKEQDWEKAKGQYIHVGLYQKLEGEKVFEGHLLDLDDQEIKLEIKIKTRRKQLTIPRKQIASARFAIEF.

The protein belongs to the RimP family.

The protein resides in the cytoplasm. In terms of biological role, required for maturation of 30S ribosomal subunits. The chain is Ribosome maturation factor RimP from Lactobacillus delbrueckii subsp. bulgaricus (strain ATCC 11842 / DSM 20081 / BCRC 10696 / JCM 1002 / NBRC 13953 / NCIMB 11778 / NCTC 12712 / WDCM 00102 / Lb 14).